We begin with the raw amino-acid sequence, 327 residues long: Aldo/keto reductase slr0942 (327 aa).

G18–G27 contacts NADP(+). Residue Y57 is the Proton donor of the active site. H119 serves as a coordination point for substrate. Residue S216–N280 coordinates NADP(+).

The protein belongs to the aldo/keto reductase family. As to quaternary structure, monomer.

The catalysed reaction is a secondary alcohol + NADP(+) = a ketone + NADPH + H(+). Its activity is regulated as follows. Curcumin non-competitively inhibits the enzyme with respect to furfural. To a lesser extent, enzyme activity is also inhibited by indomethacin, coumarate, coumarin, and alrestatin. Functionally, aldo/keto reductase with broad substrate spectrum. Catalyzes the NADPH-dependent reduction of aldehyde- and ketone-groups of different classes of carbonyl compounds to the corresponding alcohols. Highest enzymatic efficiency is observed with 4-oxonon-2-enal (4-ONE) and 4-hydroxynon-2-enal (4-HNE), that are lipid peroxidation products, and 9,10-phenanthrenequinone (9,10-PQ), a photoproduct of phenanthrene that is one of the most prevalent polycyclic aromatic hydrocarbons in the environment. Is also active on sugar-derived reactive carbonyls such as methylglyoxal (MG), glyoxal and 3-deoxyglucosone (3-DG), and on other lipid-derived carbonyls such as acrolein. May be involved in the detoxification of the toxic lipid peroxidation products 4-ONE and 4-HNE besides many other exo- and endogenic reactive carbonyl compounds (RCs) that may lead to photoinhibition or other cell damages. This chain is Aldo/keto reductase slr0942, found in Synechocystis sp. (strain ATCC 27184 / PCC 6803 / Kazusa).